The chain runs to 162 residues: Beta-lactoglobulin-1 (162 aa).

2 cysteine pairs are disulfide-bonded: C66–C160 and C106–C119.

This sequence belongs to the calycin superfamily. Lipocalin family. In terms of assembly, monomer.

It localises to the secreted. Functionally, lactoglobulin is the primary component of whey, it binds retinol and is probably involved in the transport of that molecule. This chain is Beta-lactoglobulin-1 (LGB1), found in Felis catus (Cat).